Consider the following 349-residue polypeptide: Aquaporin-4 (349 aa).

2 consecutive transmembrane segments (helical) span residues leucine 92–alanine 112 and alanine 125–leucine 147. Residues asparagine 148–alanine 150 carry the NPA 1 motif. Residues leucine 167–isoleucine 187 traverse the membrane as a helical segment. N-linked (GlcNAc...) asparagine glycans are attached at residues asparagine 194 and asparagine 207. Helical transmembrane passes span glycine 225 to cysteine 245 and methionine 256 to alanine 276. Residues asparagine 281–alanine 283 carry the NPA 2 motif. A helical membrane pass occupies residues tryptophan 314–isoleucine 334.

This sequence belongs to the MIP/aquaporin (TC 1.A.8) family.

The protein resides in the cell membrane. In terms of biological role, aquaglyceroporin that may modulate the water content and osmolytes during anhydrobiosis. This chain is Aquaporin-4, found in Milnesium tardigradum (Water bear).